Reading from the N-terminus, the 226-residue chain is Acyl-homoserine-lactone synthase (226 aa).

It belongs to the autoinducer synthase family.

It catalyses the reaction a fatty acyl-[ACP] + S-adenosyl-L-methionine = an N-acyl-L-homoserine lactone + S-methyl-5'-thioadenosine + holo-[ACP] + H(+). Required for the synthesis of OHHL (N-(3-oxohexanoyl)-L-homoserine lactone), an autoinducer molecule. This chain is Acyl-homoserine-lactone synthase (psyI), found in Pseudomonas amygdali pv. tabaci (Pseudomonas syringae pv. tabaci).